The primary structure comprises 186 residues: Large ribosomal subunit protein uL5c (186 aa).

The protein belongs to the universal ribosomal protein uL5 family. As to quaternary structure, part of the 50S ribosomal subunit; contacts the 5S rRNA.

The protein resides in the plastid. The protein localises to the chloroplast. Its function is as follows. Binds 5S rRNA, forms part of the central protuberance of the 50S subunit. This Chaetosphaeridium globosum (Charophycean green alga) protein is Large ribosomal subunit protein uL5c (rpl5).